The primary structure comprises 396 residues: Acyl-[acyl-carrier-protein] desaturase, chloroplastic (396 aa).

The transit peptide at 1–33 directs the protein to the chloroplast; sequence MALKFHPLTSQSPKLPSFRMPQLASLRSPKFVM. Fe cation-binding residues include Glu138, Glu176, His179, Glu229, Glu262, and His265.

It belongs to the fatty acid desaturase type 2 family. As to quaternary structure, homodimer. The cofactor is Fe(2+).

The protein localises to the plastid. Its subcellular location is the chloroplast. It functions in the pathway lipid metabolism; fatty acid metabolism. Introduces a cis double bond in the acyl chain of an acyl-[acyl-carrier protein]. The protein is Acyl-[acyl-carrier-protein] desaturase, chloroplastic of Cucumis sativus (Cucumber).